Here is a 247-residue protein sequence, read N- to C-terminus: UDP-2,3-diacylglucosamine hydrolase (247 aa).

5 residues coordinate Mn(2+): D8, H10, D41, N79, and H114. 79–80 (NR) is a substrate binding site. 5 residues coordinate substrate: D122, S160, D171, R174, and H202. Residues H202 and H204 each contribute to the Mn(2+) site.

This sequence belongs to the LpxH family. Requires Mn(2+) as cofactor.

The protein resides in the cell inner membrane. It carries out the reaction UDP-2-N,3-O-bis[(3R)-3-hydroxytetradecanoyl]-alpha-D-glucosamine + H2O = 2-N,3-O-bis[(3R)-3-hydroxytetradecanoyl]-alpha-D-glucosaminyl 1-phosphate + UMP + 2 H(+). It participates in glycolipid biosynthesis; lipid IV(A) biosynthesis; lipid IV(A) from (3R)-3-hydroxytetradecanoyl-[acyl-carrier-protein] and UDP-N-acetyl-alpha-D-glucosamine: step 4/6. Functionally, hydrolyzes the pyrophosphate bond of UDP-2,3-diacylglucosamine to yield 2,3-diacylglucosamine 1-phosphate (lipid X) and UMP by catalyzing the attack of water at the alpha-P atom. Involved in the biosynthesis of lipid A, a phosphorylated glycolipid that anchors the lipopolysaccharide to the outer membrane of the cell. The sequence is that of UDP-2,3-diacylglucosamine hydrolase from Xanthomonas axonopodis pv. citri (strain 306).